Consider the following 382-residue polypeptide: ATP phosphoribosyltransferase regulatory subunit (382 aa).

The protein belongs to the class-II aminoacyl-tRNA synthetase family. HisZ subfamily. Heteromultimer composed of HisG and HisZ subunits.

It is found in the cytoplasm. Its pathway is amino-acid biosynthesis; L-histidine biosynthesis; L-histidine from 5-phospho-alpha-D-ribose 1-diphosphate: step 1/9. Functionally, required for the first step of histidine biosynthesis. May allow the feedback regulation of ATP phosphoribosyltransferase activity by histidine. This chain is ATP phosphoribosyltransferase regulatory subunit, found in Albidiferax ferrireducens (strain ATCC BAA-621 / DSM 15236 / T118) (Rhodoferax ferrireducens).